The following is a 308-amino-acid chain: Protoheme IX farnesyltransferase (308 aa).

A run of 8 helical transmembrane segments spans residues 31–51 (VIEL…RGTV), 53–73 (PLLI…ANTL), 102–122 (HALI…WLST), 124–144 (LLSG…YTML), 149–169 (TSQN…IGWS), 170–190 (AVTG…FFWT), 242–262 (LATG…FLVM), and 288–308 (YLAV…PTLL).

This sequence belongs to the UbiA prenyltransferase family. Protoheme IX farnesyltransferase subfamily.

It is found in the cell membrane. It carries out the reaction heme b + (2E,6E)-farnesyl diphosphate + H2O = Fe(II)-heme o + diphosphate. The protein operates within porphyrin-containing compound metabolism; heme O biosynthesis; heme O from protoheme: step 1/1. Its function is as follows. Converts heme B (protoheme IX) to heme O by substitution of the vinyl group on carbon 2 of heme B porphyrin ring with a hydroxyethyl farnesyl side group. This chain is Protoheme IX farnesyltransferase, found in Mycolicibacterium smegmatis (strain ATCC 700084 / mc(2)155) (Mycobacterium smegmatis).